We begin with the raw amino-acid sequence, 37 residues long: MPNFSGNWKMKSSENFEELLKALGVNMMLRKIAVAAA.

Positions 21–31 (KALGVNMMLRK) match the Nuclear localization signal motif.

Belongs to the calycin superfamily. Fatty-acid binding protein (FABP) family. As to expression, embryo.

It is found in the cytoplasm. The protein localises to the endoplasmic reticulum. The protein resides in the nucleus. Functionally, transports retinoic acid to the nucleus. Regulates the access of retinoic acid to the nuclear retinoic acid receptors. The polypeptide is Cellular retinoic acid-binding protein 2 (CRABP2) (Gallus gallus (Chicken)).